Reading from the N-terminus, the 325-residue chain is Serpentine receptor class delta-59 (325 aa).

Transmembrane regions (helical) follow at residues Trp14–Ile34, Leu45–Leu65, Ile75–Ile95, Tyr97–Phe117, Thr132–Thr152, Phe190–Ile210, Thr235–Phe255, and Ile275–Val295.

The protein belongs to the nematode receptor-like protein srd family.

Its subcellular location is the membrane. The polypeptide is Serpentine receptor class delta-59 (srd-59) (Caenorhabditis elegans).